The primary structure comprises 367 residues: Protein RecA (367 aa).

73 to 80 serves as a coordination point for ATP; sequence GPESSGKT. The segment at 345–367 is disordered; the sequence is DEPVAKKASAKESKEAKELKEVE.

It belongs to the RecA family.

The protein resides in the cytoplasm. Can catalyze the hydrolysis of ATP in the presence of single-stranded DNA, the ATP-dependent uptake of single-stranded DNA by duplex DNA, and the ATP-dependent hybridization of homologous single-stranded DNAs. It interacts with LexA causing its activation and leading to its autocatalytic cleavage. The protein is Protein RecA of Herminiimonas arsenicoxydans.